Consider the following 143-residue polypeptide: Hemoglobin anodic subunit alpha (143 aa).

Ser-2 is modified (N-acetylserine). One can recognise a Globin domain in the interval 2–143 (SLSAKDMAVV…FTLALSERYR (142 aa)). His-60 serves as a coordination point for O2. His-89 provides a ligand contact to heme b.

It belongs to the globin family. As to quaternary structure, heterotetramer of two alpha chains and two beta chains. Red blood cells.

Involved in oxygen transport from gills to the various peripheral tissues. In Anguilla anguilla (European freshwater eel), this protein is Hemoglobin anodic subunit alpha (hba).